Reading from the N-terminus, the 62-residue chain is Neurotoxin 3 (62 aa).

Over residues 1-16 the composition is skewed to polar residues; that stretch reads LECHDQQSSQTPTTTG. Residues 1–22 form a disordered region; it reads LECHDQQSSQTPTTTGCSGGET. 4 cysteine pairs are disulfide-bonded: Cys3–Cys24, Cys17–Cys41, Cys43–Cys54, and Cys55–Cys60.

Belongs to the three-finger toxin family. Short-chain subfamily. Type I alpha-neurotoxin sub-subfamily. Expressed by the venom gland.

It is found in the secreted. Functionally, binds to muscle nicotinic acetylcholine receptor (nAChR) and inhibit acetylcholine from binding to the receptor, thereby impairing neuromuscular transmission. This is Neurotoxin 3 from Naja sputatrix (Malayan spitting cobra).